The sequence spans 535 residues: GMP synthase [glutamine-hydrolyzing] (535 aa).

Residues 24–217 enclose the Glutamine amidotransferase type-1 domain; that stretch reads KILIVDFGSQ…VRKVAGLKGD (194 aa). Catalysis depends on C101, which acts as the Nucleophile. Catalysis depends on residues H191 and E193. The GMPS ATP-PPase domain maps to 218–410; it reads WTMRAFREEA…LGLPEVFVGR (193 aa). 245–251 contributes to the ATP binding site; that stretch reads SGGVDSA.

In terms of assembly, homodimer.

The catalysed reaction is XMP + L-glutamine + ATP + H2O = GMP + L-glutamate + AMP + diphosphate + 2 H(+). It participates in purine metabolism; GMP biosynthesis; GMP from XMP (L-Gln route): step 1/1. Its function is as follows. Catalyzes the synthesis of GMP from XMP. The protein is GMP synthase [glutamine-hydrolyzing] of Rhodopseudomonas palustris (strain BisB18).